A 264-amino-acid polypeptide reads, in one-letter code: Thymidylate synthase (264 aa).

Arginine 21 contacts dUMP. A (6R)-5,10-methylene-5,6,7,8-tetrahydrofolate-binding site is contributed by histidine 51. 126–127 contributes to the dUMP binding site; sequence RR. The active-site Nucleophile is cysteine 146. DUMP-binding positions include 166-169, asparagine 177, and 207-209; these read RSAD and HLY. Aspartate 169 contributes to the (6R)-5,10-methylene-5,6,7,8-tetrahydrofolate binding site. Alanine 263 lines the (6R)-5,10-methylene-5,6,7,8-tetrahydrofolate pocket.

Belongs to the thymidylate synthase family. Bacterial-type ThyA subfamily. Homodimer.

The protein localises to the cytoplasm. It carries out the reaction dUMP + (6R)-5,10-methylene-5,6,7,8-tetrahydrofolate = 7,8-dihydrofolate + dTMP. Its pathway is pyrimidine metabolism; dTTP biosynthesis. Its function is as follows. Catalyzes the reductive methylation of 2'-deoxyuridine-5'-monophosphate (dUMP) to 2'-deoxythymidine-5'-monophosphate (dTMP) while utilizing 5,10-methylenetetrahydrofolate (mTHF) as the methyl donor and reductant in the reaction, yielding dihydrofolate (DHF) as a by-product. This enzymatic reaction provides an intracellular de novo source of dTMP, an essential precursor for DNA biosynthesis. In Hahella chejuensis (strain KCTC 2396), this protein is Thymidylate synthase.